Consider the following 218-residue polypeptide: Sodium channel regulatory subunit beta-1 (218 aa).

The first 18 residues, 1–18 (MGTLLAFVVGAALVSSAW), serve as a signal peptide directing secretion. The Extracellular segment spans residues 19 to 157 (GGCVEVDSET…DKANRDMASI (139 aa)). Cystine bridges form between Cys21-Cys43 and Cys40-Cys121. Positions 22–150 (VEVDSETEAV…KIHLEVVDKA (129 aa)) constitute an Ig-like C2-type domain. Residues Asn93, Asn110, Asn114, and Asn135 are each glycosylated (N-linked (GlcNAc...) asparagine). The helical transmembrane segment at 158–179 (VSEIMMYVLIVVLTIWLVAEMV) threads the bilayer. The Cytoplasmic portion of the chain corresponds to 180 to 218 (YCYKKIAAATEAAAQENASEYLAITSESKENCTGVQVAE).

It belongs to the sodium channel auxiliary subunit SCN1B (TC 8.A.17) family. A voltage-gated sodium (Nav) channel consists of an ion-conducting pore-forming alpha subunit functional on its own that is regulated by one or more beta subunits. Interacts with SCN1A; regulatory subunit of SCN1A/Nav1.1. Interacts with SCN3A; regulatory subunit of SCN3A/Nav1.3. Interacts with SCN4A; regulatory subunit of SCN4A/Nav1.4. Interacts with SCN5A; regulatory subunit of SCN5A/Nav1.5. Interacts with SCN8A; regulatory subunit of SCN8A/Nav1.6. Interacts with SCN9A; regulatory subunit of SCN9A/Nav1.7. Interacts with SCN10A; regulatory subunit of SCN10A/Nav1.8. Interacts with NFASC. Interacts with TMEM65.

Its subcellular location is the cell membrane. The protein localises to the perikaryon. It is found in the cell projection. It localises to the axon. Regulatory subunit of multiple voltage-gated sodium (Nav) channels directly mediating the depolarization of excitable membranes. Navs, also called VGSCs (voltage-gated sodium channels) or VDSCs (voltage-dependent sodium channels), operate by switching between closed and open conformations depending on the voltage difference across the membrane. In the open conformation they allow Na(+) ions to selectively pass through the pore, along their electrochemical gradient. The influx of Na+ ions provokes membrane depolarization, initiating the propagation of electrical signals throughout cells and tissues. The accessory beta subunits participate in localization and functional modulation of the Nav channels. Modulates the activity of SCN1A/Nav1.1, SCN2A/Nav1.2, SCN3A/Nav1.3, SCN4A/Nav1.4, SCN5A/Nav1.5, SCN8A/Nav1.6, SCN9A/Nav1.7 and SCN10A/Nav1.8. This chain is Sodium channel regulatory subunit beta-1, found in Bos taurus (Bovine).